Here is a 434-residue protein sequence, read N- to C-terminus: UDP-N-acetylglucosamine 1-carboxyvinyltransferase 1 (434 aa).

Residue 22-23 (KN) participates in phosphoenolpyruvate binding. Arginine 93 serves as a coordination point for UDP-N-acetyl-alpha-D-glucosamine. The active-site Proton donor is cysteine 117. A 2-(S-cysteinyl)pyruvic acid O-phosphothioketal modification is found at cysteine 117. Residues 122–126 (RPIDQ), aspartate 306, and valine 328 each bind UDP-N-acetyl-alpha-D-glucosamine.

This sequence belongs to the EPSP synthase family. MurA subfamily.

It localises to the cytoplasm. The catalysed reaction is phosphoenolpyruvate + UDP-N-acetyl-alpha-D-glucosamine = UDP-N-acetyl-3-O-(1-carboxyvinyl)-alpha-D-glucosamine + phosphate. Its pathway is cell wall biogenesis; peptidoglycan biosynthesis. Cell wall formation. Adds enolpyruvyl to UDP-N-acetylglucosamine. This chain is UDP-N-acetylglucosamine 1-carboxyvinyltransferase 1, found in Bacillus anthracis.